Here is a 182-residue protein sequence, read N- to C-terminus: Putative manganese efflux pump MntP (182 aa).

5 consecutive transmembrane segments (helical) span residues 3 to 23 (ILLL…SNGA), 42 to 62 (FFQG…VGFI), 65 to 85 (IDHF…IFDS), 126 to 146 (IWFS…AATF), and 161 to 181 (ILGG…HLGI).

The protein belongs to the MntP (TC 9.B.29) family.

It localises to the cell inner membrane. Its function is as follows. Probably functions as a manganese efflux pump. The protein is Putative manganese efflux pump MntP of Campylobacter hominis (strain ATCC BAA-381 / DSM 21671 / CCUG 45161 / LMG 19568 / NCTC 13146 / CH001A).